The sequence spans 453 residues: Bifunctional protein GlmU (453 aa).

The pyrophosphorylase stretch occupies residues 1 to 227 (MTQLSVVILA…LMEVEGANNR (227 aa)). UDP-N-acetyl-alpha-D-glucosamine is bound by residues 9–12 (LAAG), Lys-23, Gln-74, 79–80 (GT), 101–103 (YGD), Gly-138, Glu-152, Asn-167, and Asn-225. Mg(2+) is bound at residue Asp-103. Asn-225 contacts Mg(2+). Residues 228-248 (LQLAALERYYQKIQAEKLLLA) form a linker region. The interval 249–453 (GVTIIDPARF…IQGWQRPTKK (205 aa)) is N-acetyltransferase. Residues Arg-331 and Lys-349 each contribute to the UDP-N-acetyl-alpha-D-glucosamine site. Residue His-361 is the Proton acceptor of the active site. Tyr-364 and Asn-375 together coordinate UDP-N-acetyl-alpha-D-glucosamine. Acetyl-CoA contacts are provided by residues Ala-378, 384–385 (NY), Ser-403, Ala-421, and Arg-438.

In the N-terminal section; belongs to the N-acetylglucosamine-1-phosphate uridyltransferase family. This sequence in the C-terminal section; belongs to the transferase hexapeptide repeat family. In terms of assembly, homotrimer. Mg(2+) serves as cofactor.

The protein resides in the cytoplasm. It carries out the reaction alpha-D-glucosamine 1-phosphate + acetyl-CoA = N-acetyl-alpha-D-glucosamine 1-phosphate + CoA + H(+). The catalysed reaction is N-acetyl-alpha-D-glucosamine 1-phosphate + UTP + H(+) = UDP-N-acetyl-alpha-D-glucosamine + diphosphate. It functions in the pathway nucleotide-sugar biosynthesis; UDP-N-acetyl-alpha-D-glucosamine biosynthesis; N-acetyl-alpha-D-glucosamine 1-phosphate from alpha-D-glucosamine 6-phosphate (route II): step 2/2. Its pathway is nucleotide-sugar biosynthesis; UDP-N-acetyl-alpha-D-glucosamine biosynthesis; UDP-N-acetyl-alpha-D-glucosamine from N-acetyl-alpha-D-glucosamine 1-phosphate: step 1/1. It participates in bacterial outer membrane biogenesis; LPS lipid A biosynthesis. Its function is as follows. Catalyzes the last two sequential reactions in the de novo biosynthetic pathway for UDP-N-acetylglucosamine (UDP-GlcNAc). The C-terminal domain catalyzes the transfer of acetyl group from acetyl coenzyme A to glucosamine-1-phosphate (GlcN-1-P) to produce N-acetylglucosamine-1-phosphate (GlcNAc-1-P), which is converted into UDP-GlcNAc by the transfer of uridine 5-monophosphate (from uridine 5-triphosphate), a reaction catalyzed by the N-terminal domain. The chain is Bifunctional protein GlmU from Glaesserella parasuis serovar 5 (strain SH0165) (Haemophilus parasuis).